The chain runs to 67 residues: Large ribosomal subunit protein bL35 (67 aa).

The tract at residues 1–20 (MPKLKTKSGAKKRFVPKKSG) is disordered.

This sequence belongs to the bacterial ribosomal protein bL35 family.

This Anaeromyxobacter dehalogenans (strain 2CP-1 / ATCC BAA-258) protein is Large ribosomal subunit protein bL35.